We begin with the raw amino-acid sequence, 656 residues long: MGVQGQPSVAPALREVPAGFETAHANGAKYLEMYRESLENPDAFWGREGKRLDWITPYTKVKNTDFTFGKVSIKWFEDGVLNASVNCIDRHLRDRALQTAIIFEPDDPKEPARHITYKELSEKVNRMANVLLSQGIMRGDRVVIYLPMIPEAAYAMLACARIGAIHSIVFAGFSPDALANRINDCGAKLVITADTAPRGGRRTPLKANTDAALLHCSDKVRCLVVKHTGDQISWVHGRDVDLLYLMEHVSPECPPRPMNAEDPLFILYTSGSTGKPKGVVHTTGGYLVYAAMTHQYTFDYKDGDVFWCTADVGWVTGHSYIIYGPLANGATTLMFEGVPTFPDAGRFWAVCEKHKVNQFYTAPTAIRALMGQGPEWVEKYDLSSLRVLGSVGEPINPEAWVWYDKYVGKGKCPIVDTFWQTETGGHMITPLPGATPTKPGSATNPFFGVKPVVLDPQTAVRIGEVECEGVLCISDSWPGQMRTVWGDHDRFQETYFGQYRGYYFTGDGCRRDKDGYYWITGRVDDVINVSGHRMGTAEVESALVAHPQVAEAAVVGYPHDIKGQGIYAYVTLMNGIEPSEDLRKDLVKWVRTEIGPIASPDLIQWAPGLPKTRSGKIMRRILRKIAENDYGALGDISTLADPGVVQELIDNRMNRA.

Residues 198 to 201 (RGGR) and T316 contribute to the CoA site. Residues 392–394 (GEP), 416–421 (DTFWQT), D507, and R522 contribute to the ATP site. S530 contacts CoA. R533 is an ATP binding site. The Mg(2+) site is built by V544, H546, and V549. CoA is bound at residue R591. K616 carries the post-translational modification N6-acetyllysine.

Belongs to the ATP-dependent AMP-binding enzyme family. Requires Mg(2+) as cofactor. Post-translationally, acetylated. Deacetylation by the SIR2-homolog deacetylase activates the enzyme.

It catalyses the reaction acetate + ATP + CoA = acetyl-CoA + AMP + diphosphate. Its function is as follows. Catalyzes the conversion of acetate into acetyl-CoA (AcCoA), an essential intermediate at the junction of anabolic and catabolic pathways. AcsA undergoes a two-step reaction. In the first half reaction, AcsA combines acetate with ATP to form acetyl-adenylate (AcAMP) intermediate. In the second half reaction, it can then transfer the acetyl group from AcAMP to the sulfhydryl group of CoA, forming the product AcCoA. The chain is Acetyl-coenzyme A synthetase from Rhodobacter capsulatus (strain ATCC BAA-309 / NBRC 16581 / SB1003).